The primary structure comprises 208 residues: Thymidylate kinase (208 aa).

Residue 10–17 coordinates ATP; sequence GIDGSGKT.

It belongs to the thymidylate kinase family.

The catalysed reaction is dTMP + ATP = dTDP + ADP. Its function is as follows. Phosphorylation of dTMP to form dTDP in both de novo and salvage pathways of dTTP synthesis. The chain is Thymidylate kinase from Ligilactobacillus salivarius (strain UCC118) (Lactobacillus salivarius).